Reading from the N-terminus, the 156-residue chain is Small ribosomal subunit protein bS16 (156 aa).

The segment covering 85–120 (GESGAEGTLKSKSEKEAFVAPERDSVILPEEPKQEE) has biased composition (basic and acidic residues). Positions 85 to 156 (GESGAEGTLK…APAEDAEKSE (72 aa)) are disordered. Positions 132–150 (PAEEAAEAPAEEAAEAPAE) are enriched in acidic residues.

It belongs to the bacterial ribosomal protein bS16 family.

The polypeptide is Small ribosomal subunit protein bS16 (Micrococcus luteus (strain ATCC 4698 / DSM 20030 / JCM 1464 / CCM 169 / CCUG 5858 / IAM 1056 / NBRC 3333 / NCIMB 9278 / NCTC 2665 / VKM Ac-2230) (Micrococcus lysodeikticus)).